The primary structure comprises 431 residues: Adenylosuccinate synthetase (431 aa).

Residues 12–18 (GDEGKGK) and 40–42 (GHS) contribute to the GTP site. The active-site Proton acceptor is the D13. The Mg(2+) site is built by D13 and G40. IMP-binding positions include 13–16 (DEGK) and 38–41 (NAGH). H41 acts as the Proton donor in catalysis. The segment at 114 to 133 (QQQERDRSKNGEKIGTTNKG) is disordered. Residues 115 to 125 (QQERDRSKNGE) are compositionally biased toward basic and acidic residues. Residues T130, R144, Q225, T240, and R304 each coordinate IMP. Substrate is bound at residue 300–306 (TVTKRPR). Residues R306, 332–334 (CLD), and 414–416 (SIG) contribute to the GTP site.

This sequence belongs to the adenylosuccinate synthetase family. As to quaternary structure, homodimer. It depends on Mg(2+) as a cofactor.

It localises to the cytoplasm. The catalysed reaction is IMP + L-aspartate + GTP = N(6)-(1,2-dicarboxyethyl)-AMP + GDP + phosphate + 2 H(+). It participates in purine metabolism; AMP biosynthesis via de novo pathway; AMP from IMP: step 1/2. Its function is as follows. Plays an important role in the de novo pathway of purine nucleotide biosynthesis. Catalyzes the first committed step in the biosynthesis of AMP from IMP. In Pediococcus pentosaceus (strain ATCC 25745 / CCUG 21536 / LMG 10740 / 183-1w), this protein is Adenylosuccinate synthetase.